Here is a 124-residue protein sequence, read N- to C-terminus: NADPH-dependent 7-cyano-7-deazaguanine reductase (124 aa).

The active-site Thioimide intermediate is the Cys-40. Asp-47 (proton donor) is an active-site residue. Substrate is bound by residues 62-64 (VEL) and 81-82 (HE).

The protein belongs to the GTP cyclohydrolase I family. QueF type 1 subfamily.

The protein resides in the cytoplasm. It catalyses the reaction 7-aminomethyl-7-carbaguanine + 2 NADP(+) = 7-cyano-7-deazaguanine + 2 NADPH + 3 H(+). It participates in tRNA modification; tRNA-queuosine biosynthesis. Its function is as follows. Catalyzes the NADPH-dependent reduction of 7-cyano-7-deazaguanine (preQ0) to 7-aminomethyl-7-deazaguanine (preQ1). This Wolinella succinogenes (strain ATCC 29543 / DSM 1740 / CCUG 13145 / JCM 31913 / LMG 7466 / NCTC 11488 / FDC 602W) (Vibrio succinogenes) protein is NADPH-dependent 7-cyano-7-deazaguanine reductase.